The primary structure comprises 443 residues: Adenylosuccinate synthetase (443 aa).

GTP-binding positions include 12–18 (GDEGKGK) and 40–42 (GHT). The active-site Proton acceptor is the D13. Positions 13 and 40 each coordinate Mg(2+). IMP is bound by residues 13 to 16 (DEGK), 38 to 41 (NAGH), T128, R142, Q223, T238, and R302. H41 acts as the Proton donor in catalysis. 298–304 (TTTGRRR) serves as a coordination point for substrate. GTP-binding positions include R304, 330-332 (KLD), and 412-414 (SLG).

The protein belongs to the adenylosuccinate synthetase family. In terms of assembly, homodimer. Mg(2+) serves as cofactor.

The protein resides in the cytoplasm. It catalyses the reaction IMP + L-aspartate + GTP = N(6)-(1,2-dicarboxyethyl)-AMP + GDP + phosphate + 2 H(+). The protein operates within purine metabolism; AMP biosynthesis via de novo pathway; AMP from IMP: step 1/2. Functionally, plays an important role in the de novo pathway of purine nucleotide biosynthesis. Catalyzes the first committed step in the biosynthesis of AMP from IMP. In Picosynechococcus sp. (strain ATCC 27264 / PCC 7002 / PR-6) (Agmenellum quadruplicatum), this protein is Adenylosuccinate synthetase.